Reading from the N-terminus, the 444-residue chain is Tol-Pal system protein TolB (444 aa).

Residues 1–19 (MRNIIYFILSLLFSVTSYA) form the signal peptide.

It belongs to the TolB family. In terms of assembly, the Tol-Pal system is composed of five core proteins: the inner membrane proteins TolA, TolQ and TolR, the periplasmic protein TolB and the outer membrane protein Pal. They form a network linking the inner and outer membranes and the peptidoglycan layer.

It is found in the periplasm. Its function is as follows. Part of the Tol-Pal system, which plays a role in outer membrane invagination during cell division and is important for maintaining outer membrane integrity. In Rickettsia africae (strain ESF-5), this protein is Tol-Pal system protein TolB.